Consider the following 290-residue polypeptide: PIH1 domain-containing protein 1 (290 aa).

Residues 34–50 (ELQQAQTSRPESTQIQP) are compositionally biased toward polar residues. Residues 34–53 (ELQQAQTSRPESTQIQPQPG) form a disordered region. Ser173 bears the Phosphoserine mark.

The protein belongs to the PIH1 family. Component of the R2TP complex composed at least of RUVBL1, RUVBL2, RPAP3 and PIHD1. Component of the PAQosome complex which is responsible for the biogenesis of several protein complexes and which consists of R2TP complex members RUVBL1, RUVBL2, RPAP3 and PIH1D1, URI complex members PFDN2, PFDN6, PDRG1, UXT and URI1 as well as ASDURF, POLR2E and DNAAF10/WDR92. Interacts with phosphorylated TELO2 and mediates interaction of TELO2 with the R2TP complex. Interacts with phosphorylated ECD, EFTUD2/SNRP116, RPB1 and UBR5 and with RPB1 in a phosphorylation-independent manner. Interacts with the core C/D box snoRNP particle components NOP58 and FBL and with RUVBL1/TIP49. Interacts with RPAP3 and DNAAF10. Interacts with histone H4 and with SWI/SNF complex member SMARCB1/SNF5. Interacts with the mTORC1 complex member RPTOR. Interacts with MSL1.

It is found in the nucleus. Its function is as follows. Involved in the assembly of C/D box small nucleolar ribonucleoprotein (snoRNP) particles. Recruits the SWI/SNF complex to the core promoter of rRNA genes and enhances pre-rRNA transcription. Mediates interaction of TELO2 with the R2TP complex which is necessary for the stability of MTOR and SMG1. Positively regulates the assembly and activity of the mTORC1 complex. The polypeptide is PIH1 domain-containing protein 1 (PIH1D1) (Bos taurus (Bovine)).